A 348-amino-acid polypeptide reads, in one-letter code: Dihydroorotate dehydrogenase (quinone) (348 aa).

Residues Ala60–Lys64 and Thr84 contribute to the FMN site. Lys64 is a binding site for substrate. Residue Asn109–Phe113 participates in substrate binding. Residues Asn138 and Asn169 each coordinate FMN. Asn169 is a substrate binding site. Ser172 serves as the catalytic Nucleophile. Asn174 provides a ligand contact to substrate. 2 residues coordinate FMN: Lys207 and Ser235. Residue Asn236–Thr237 coordinates substrate. FMN contacts are provided by residues Gly258, Gly287, and Tyr308 to Ser309.

This sequence belongs to the dihydroorotate dehydrogenase family. Type 2 subfamily. In terms of assembly, monomer. FMN is required as a cofactor.

The protein resides in the cell membrane. The catalysed reaction is (S)-dihydroorotate + a quinone = orotate + a quinol. It functions in the pathway pyrimidine metabolism; UMP biosynthesis via de novo pathway; orotate from (S)-dihydroorotate (quinone route): step 1/1. Its function is as follows. Catalyzes the conversion of dihydroorotate to orotate with quinone as electron acceptor. The sequence is that of Dihydroorotate dehydrogenase (quinone) from Parvibaculum lavamentivorans (strain DS-1 / DSM 13023 / NCIMB 13966).